Here is a 905-residue protein sequence, read N- to C-terminus: Phosphatidylethanolamine N-methyltransferase (905 aa).

Polar residues-rich tracts occupy residues 1–22 and 40–58; these read MTNQIPSASSAADFGSSKSTSV and DSNGLQQTNQIEQAESSLN. The segment at 1–73 is disordered; it reads MTNQIPSASS…SEPERYGCTP (73 aa). Residues 1 to 104 lie on the Lumenal side of the membrane; the sequence is MTNQIPSASS…DPRFSKTPWD (104 aa). The chain crosses the membrane as a helical span at residues 105-125; that stretch reads WIVISSILAQVLLFFMTTGAV. Residues 126–128 are Cytoplasmic-facing; the sequence is RRY. The helical transmembrane segment at 129–149 threads the bilayer; the sequence is SMMLCFFFWRISYDAGIGFLL. Over 150 to 209 the chain is Lumenal; it reads HMQSNHRKVVTWISDFGFFDKENHPKLYDLTKKQLISKMDSSYNYDTSPLEFNSWLVFRH. Residues 210–230 form a helical membrane-spanning segment; it reads FVDLILMCDFCSYILMGLAWT. Topologically, residues 231-236 are cytoplasmic; sequence CWPKVN. The helical transmembrane segment at 237–257 threads the bilayer; sequence IILQFLRIFGGIALIVFNYWV. At 258–268 the chain is on the lumenal side; it reads KMDAHRVVRDY. A helical transmembrane segment spans residues 269–289; sequence AWYWGDFFFLLRSSLVFNGVF. The Cytoplasmic segment spans residues 290–313; that stretch reads ELAPHPMYSVGYAGYYGMSLLTGS. A helical transmembrane segment spans residues 314 to 334; that stretch reads YAVLFASILAHAAQFGFLLFV. Topologically, residues 335–379 are lumenal; the sequence is ENPHIERTYGTDINHARLSPRGEDNEFELPPEHDLVGFVNFDFTR. Serine 353 bears the Phosphoserine mark. A helical membrane pass occupies residues 380-400; that stretch reads ISDVALLIIALYSIFIILLSS. At 401–408 the chain is on the cytoplasmic side; sequence NSHYSQFW. Residues 409-429 form a helical membrane-spanning segment; sequence AIFQAFVWRFLHSIIHAFILF. The Lumenal segment spans residues 430–456; that stretch reads YQSKSKAWTKHFIRNGESAAYAWSQWK. A helical membrane pass occupies residues 457–479; sequence GLYNLTLNMSYISFVMAAWKLYH. Topologically, residues 480 to 493 are cytoplasmic; it reads LPSNWTYGLVSLRH. Residues 494–514 traverse the membrane as a helical segment; sequence ALGFGLIALHIYTSVSIYEDL. Over 515–552 the chain is Lumenal; it reads GQYGWFYGDFFLPSRSPKLVYQGIYRYVNNPERFLGCS. A helical transmembrane segment spans residues 553-573; the sequence is AYWGLALISSSAWIFLIAILA. Residues 574–905 lie on the Cytoplasmic side of the membrane; that stretch reads QLSNLAIIRL…FDGPSGAKDD (332 aa).

The protein belongs to the class VI-like SAM-binding methyltransferase superfamily. CHO2 family.

It localises to the endoplasmic reticulum membrane. It carries out the reaction a 1,2-diacyl-sn-glycero-3-phosphoethanolamine + S-adenosyl-L-methionine = a 1,2-diacyl-sn-glycero-3-phospho-N-methylethanolamine + S-adenosyl-L-homocysteine + H(+). It functions in the pathway phospholipid metabolism; phosphatidylcholine biosynthesis. Its function is as follows. Catalyzes the first step of the methylation pathway of phosphatidylcholine biosynthesis, the SAM-dependent methylation of phosphatidylethanolamine (PE) to phosphatidylmonomethylethanolamine (PMME). The protein is Phosphatidylethanolamine N-methyltransferase of Schizosaccharomyces pombe (strain 972 / ATCC 24843) (Fission yeast).